Reading from the N-terminus, the 379-residue chain is Armadillo repeat-containing X-linked protein 3 (379 aa).

The Mitochondrial intermembrane segment spans residues 1 to 6 (MGYARK). Mitochondrion outer membrane (MOM)-targeting sequence stretches follow at residues 1-6 (MGYARK) and 26-37 (RLTRGRKQNKEK). A helical; Signal-anchor membrane pass occupies residues 7–29 (VGWVTAGLVIGAGACYCIYRLTR). Over 30–379 (GRKQNKEKMA…TERMFPKSQE (350 aa)) the chain is Cytoplasmic. Residues 34 to 69 (NKEKMAEGGPGDVEDAGDCSGARYNDWSDDDDDSNE) form a disordered region. A phosphoserine mark is found at serine 61, serine 67, and serine 72. The segment at 89 to 98 (RARARARARA) is nuclear localization signal. A Phosphoserine modification is found at serine 110. ARM repeat units follow at residues 111–151 (PNSD…NNAA), 153–192 (AFNR…NLSV), and 233–272 (VTNE…NLAE).

It belongs to the eutherian X-chromosome-specific Armcx family. As to quaternary structure, interacts (via ARM domain) with MIRO1, MIRO2 and TRAK2. The interaction with Miro is calcium-dependent. Interacts with Sox10.

It localises to the mitochondrion outer membrane. The protein resides in the cytoplasm. The protein localises to the nucleus. Functionally, regulates mitochondrial aggregation and transport in axons in living neurons. May link mitochondria to the Trak2-kinesin motor complex via its interaction with Miro and Trak2. Mitochondrial distribution and dynamics is regulated through Armcx3 protein degradation, which is promoted by PCK and negatively regulated by Wnt1. Enhances the Sox10-mediated transactivation of the neuronal acetylcholine receptor subunit alpha-3 and beta-4 subunit gene promoters. The sequence is that of Armadillo repeat-containing X-linked protein 3 (Armcx3) from Rattus norvegicus (Rat).